Consider the following 579-residue polypeptide: Potassium-transporting ATPase potassium-binding subunit (579 aa).

10 helical membrane-spanning segments follow: residues 2-22, 66-86, 135-155, 177-197, 260-280, 292-312, 391-411, 437-457, 490-510, and 546-566; these read MNLVLQYGLYILILVVLAIPL, SFSVLAFSIISLIVLFLLHIF, GLTVQNFVSAAVGISVLFALI, VLYILIPLSIVVSLALVSQGV, TILSNLFEMISLLLIPVALCF, GIAIFVAMGIMLVVAMAIVGV, VFGGVGCGLYGMIGFAILAVF, VLVCLATPIAILIGSGIASIL, FAGFAANTPFINISIGLSMIF, and FIGLLIFVVLLIGALSFFPAL.

Belongs to the KdpA family. In terms of assembly, the system is composed of three essential subunits: KdpA, KdpB and KdpC.

The protein localises to the cell membrane. Its function is as follows. Part of the high-affinity ATP-driven potassium transport (or Kdp) system, which catalyzes the hydrolysis of ATP coupled with the electrogenic transport of potassium into the cytoplasm. This subunit binds the extracellular potassium ions and delivers the ions to the membrane domain of KdpB through an intramembrane tunnel. The protein is Potassium-transporting ATPase potassium-binding subunit of Clostridium botulinum (strain Eklund 17B / Type B).